Consider the following 191-residue polypeptide: Transcriptional regulator MET32 (191 aa).

The tract at residues K70–K96 is disordered. Residues K85–K96 show a composition bias toward basic and acidic residues. The C2H2-type 1 zinc finger occupies F98–H120. Residues N126–C150 form a C2H2-type 2; atypical zinc finger.

As to quaternary structure, interacts with MET4 and MET28.

It is found in the cytoplasm. It localises to the nucleus. In terms of biological role, auxiliary transcriptional regulator of sulfur amino acid metabolism. Involved in the transcriptional activation of MET28. This Saccharomyces cerevisiae (strain ATCC 204508 / S288c) (Baker's yeast) protein is Transcriptional regulator MET32 (MET32).